A 273-amino-acid chain; its full sequence is 4-hydroxy-tetrahydrodipicolinate reductase (273 aa).

12–17 (GAGGRM) contacts NAD(+). Position 39 (R39) interacts with NADP(+). NAD(+) contacts are provided by residues 102 to 104 (GTT) and 126 to 129 (AANF). H159 (proton donor/acceptor) is an active-site residue. H160 contributes to the (S)-2,3,4,5-tetrahydrodipicolinate binding site. Catalysis depends on K163, which acts as the Proton donor. Position 169–170 (169–170 (GT)) interacts with (S)-2,3,4,5-tetrahydrodipicolinate.

It belongs to the DapB family. As to quaternary structure, homotetramer.

It is found in the cytoplasm. The catalysed reaction is (S)-2,3,4,5-tetrahydrodipicolinate + NAD(+) + H2O = (2S,4S)-4-hydroxy-2,3,4,5-tetrahydrodipicolinate + NADH + H(+). It carries out the reaction (S)-2,3,4,5-tetrahydrodipicolinate + NADP(+) + H2O = (2S,4S)-4-hydroxy-2,3,4,5-tetrahydrodipicolinate + NADPH + H(+). It functions in the pathway amino-acid biosynthesis; L-lysine biosynthesis via DAP pathway; (S)-tetrahydrodipicolinate from L-aspartate: step 4/4. In terms of biological role, catalyzes the conversion of 4-hydroxy-tetrahydrodipicolinate (HTPA) to tetrahydrodipicolinate. The chain is 4-hydroxy-tetrahydrodipicolinate reductase from Sodalis glossinidius (strain morsitans).